We begin with the raw amino-acid sequence, 429 residues long: Protein AST1 (429 aa).

Interacts with PMA1.

The protein localises to the cell membrane. Its subcellular location is the membrane raft. The protein resides in the golgi apparatus membrane. It is found in the late endosome membrane. In terms of biological role, lipid raft-associated protein involved in the targeting of PMA1 from Golgi to the plasma membrane. May induce clustering of PMA1, which facilitates partition of PMA1 into lipid rafts after leaving the ER and its transport to the cell surface. The protein is Protein AST1 of Saccharomyces cerevisiae (strain ATCC 204508 / S288c) (Baker's yeast).